The sequence spans 230 residues: Flagellar L-ring protein (230 aa).

A signal peptide spans 1–18 (MNRLNIAVSCLATALLFG). Cysteine 19 carries the N-palmitoyl cysteine lipid modification. Residue cysteine 19 is the site of S-diacylglycerol cysteine attachment.

Belongs to the FlgH family. In terms of assembly, the basal body constitutes a major portion of the flagellar organelle and consists of four rings (L,P,S, and M) mounted on a central rod.

It is found in the cell outer membrane. The protein localises to the bacterial flagellum basal body. Functionally, assembles around the rod to form the L-ring and probably protects the motor/basal body from shearing forces during rotation. The polypeptide is Flagellar L-ring protein (Legionella pneumophila (strain Corby)).